The sequence spans 261 residues: MNAKGIEGKIAFITGAAQGIGEAVARTLASQGAHIAAVDYNPEKLEKVVSSLKAEGRHAEAFPADVRDSAAIDEITARIEREMGPIDILVNVAGVLRPGLIHSLSDEEWEATFSVNSTGVFNASRSVSKYMMDRRSGSIVTVGSNAAGVPRTSMAAYASSKAAAVMFTKCLGLELAEYNIRCNIVSPGSTETDMQWSLWADENGAEQVIKGSLETFKTGIPLKKLAKPSDIADAVLFLVSGQAGHITMHNLCVDGGATLGV.

Phenylalanine 12–alanine 36 lines the NAD(+) pocket. A substrate-binding site is contributed by serine 144. Catalysis depends on tyrosine 157, which acts as the Proton acceptor.

The protein belongs to the short-chain dehydrogenases/reductases (SDR) family.

Its subcellular location is the cytoplasm. It catalyses the reaction (2S,3S)-2,3-dihydroxy-2,3-dihydrobenzoate + NAD(+) = 2,3-dihydroxybenzoate + NADH + H(+). It participates in siderophore biosynthesis; bacillibactin biosynthesis. The polypeptide is 2,3-dihydro-2,3-dihydroxybenzoate dehydrogenase (dhbA) (Bacillus subtilis (strain 168)).